We begin with the raw amino-acid sequence, 379 residues long: Probable 3-phenylpropionic acid transporter (379 aa).

The Cytoplasmic portion of the chain corresponds to 1-4 (MVLQ). A helical membrane pass occupies residues 5–31 (STRWLALGYFTYFFSYGIFLPFWSVWL). The Periplasmic segment spans residues 32 to 37 (KGIGLT). Residues 38-66 (PETIGLLLGAGLVARFLGSLLIAPRVSDP) form a helical membrane-spanning segment. The Cytoplasmic portion of the chain corresponds to 67–70 (SRLI). Residues 71–96 (SALRVLALLTLLFAVAFWAGAHVAWL) form a helical membrane-spanning segment. The Periplasmic portion of the chain corresponds to 97–100 (MLVM). Residues 101 to 118 (IGFNLFFSPLVPLTDALA) traverse the membrane as a helical segment. At 119-129 (NTWQKQFPLDY) the chain is on the cytoplasmic side. A helical transmembrane segment spans residues 130–152 (GKVRLWGSVAFVIGSALTGKLVT). Topologically, residues 153-155 (MFD) are periplasmic. Residues 156-175 (YRVILALLTLGVASMLLGFL) traverse the membrane as a helical segment. The Cytoplasmic segment spans residues 176–207 (IRPTIQPQGASRQQESTGWSAWLALVRQNWRF). The chain crosses the membrane as a helical span at residues 208 to 227 (LACVCLLQGAHAAYYGFSAI). Residues 228–231 (YWQA) are Periplasmic-facing. Residues 232 to 256 (AGYSASAVGYLWSLGVVAEVIIFAL) traverse the membrane as a helical segment. Over 257 to 266 (SNKLFRRCSA) the chain is Cytoplasmic. A helical membrane pass occupies residues 267–286 (RDMLLISAICGVVRWGIMGA). Residues 287–289 (TTA) lie on the Periplasmic side of the membrane. A helical transmembrane segment spans residues 290–312 (LPWLIVVQILHCGTFTVCHLAAM). Residues 313–323 (RYIAARQGSEV) lie on the Cytoplasmic side of the membrane. A helical transmembrane segment spans residues 324–351 (IRLQAVYSAVAMGGSIAIMTVFAGFLYQ). Residues 352–354 (YLG) lie on the Periplasmic side of the membrane. Residues 355-375 (HGVFWVMALVALPAMFLRPKV) traverse the membrane as a helical segment. Residues 376–379 (VPSC) lie on the Cytoplasmic side of the membrane.

Belongs to the major facilitator superfamily. Phenyl propionate permease (PPP) (TC 2.A.1.27) family.

It localises to the cell inner membrane. Its function is as follows. Probable permease involved in the uptake of 3-phenylpropionic acid. The chain is Probable 3-phenylpropionic acid transporter (hcaT) from Escherichia coli (strain K12).